A 246-amino-acid polypeptide reads, in one-letter code: MAGHSKWANTRHRKAAQDAKRGKIFTKIIRELVTAAKLGGGDPDANPRLRAAVDKALSNNMTRDTLNRAIARGVGGDDDANMETIIYEGYGPGGTAIMIECLSDNRNRTVAEVRHAFSKCGGNLGTDGSVAYLFSKKGVISFEKGDEDTIMEAALEAGAEDVVTYDDGAIDVYTAWEEMGKVRDALEAAGLKADSAEVSMLPSTKADMDAETAPKLMRLIDMLEDCDDVQEVYHNGEISDEVAATL.

Residues 1 to 20 (MAGHSKWANTRHRKAAQDAK) are disordered.

This sequence belongs to the TACO1 family.

The protein localises to the cytoplasm. The chain is Probable transcriptional regulatory protein YebC from Shigella dysenteriae serotype 1 (strain Sd197).